We begin with the raw amino-acid sequence, 337 residues long: Serpentine receptor class delta-18 (337 aa).

6 helical membrane passes run 2-22 (IIFFEIWHWSWALLGCYLNLL), 90-110 (VGLSFFLHCLTHSVWSLLLSF), 130-150 (LILVFYIPSLIQALTYWTIFA), 187-207 (IYSIGHICLPFFPVYITIFIL), 236-256 (ALTIQAFIPIFVGIAVTFYFL), and 270-290 (SIYAVAILAPALSPITYLYFV).

Belongs to the nematode receptor-like protein srd family.

The protein resides in the membrane. The sequence is that of Serpentine receptor class delta-18 (srd-18) from Caenorhabditis elegans.